A 393-amino-acid polypeptide reads, in one-letter code: Proteasome-activating nucleotidase (393 aa).

A coiled-coil region spans residues 14 to 53; that stretch reads SDEVQLVRLLEEKIKSLQIEIENLRKELNYYKAEMEKMLS. Residues 178–183 and Tyr317 contribute to the ATP site; that span reads GTGKTM. A docks into pockets in the proteasome alpha-ring to cause gate opening region spans residues 391-393; that stretch reads KYS.

It belongs to the AAA ATPase family. Homohexamer. The hexameric complex has a two-ring architecture resembling a top hat that caps the 20S proteasome core at one or both ends. Upon ATP-binding, the C-terminus of PAN interacts with the alpha-rings of the proteasome core by binding to the intersubunit pockets.

It is found in the cytoplasm. In terms of biological role, ATPase which is responsible for recognizing, binding, unfolding and translocation of substrate proteins into the archaeal 20S proteasome core particle. Is essential for opening the gate of the 20S proteasome via an interaction with its C-terminus, thereby allowing substrate entry and access to the site of proteolysis. Thus, the C-termini of the proteasomal ATPase function like a 'key in a lock' to induce gate opening and therefore regulate proteolysis. Unfolding activity requires energy from ATP hydrolysis, whereas ATP binding alone promotes ATPase-20S proteasome association which triggers gate opening, and supports translocation of unfolded substrates. In Saccharolobus islandicus (strain Y.N.15.51 / Yellowstone #2) (Sulfolobus islandicus), this protein is Proteasome-activating nucleotidase.